Here is a 294-residue protein sequence, read N- to C-terminus: Nucleotide-binding protein Maqu_2718 (294 aa).

ATP is bound at residue 8–15 (GRSGSGKS). 61–64 (DARN) provides a ligand contact to GTP.

Belongs to the RapZ-like family.

Its function is as follows. Displays ATPase and GTPase activities. The chain is Nucleotide-binding protein Maqu_2718 from Marinobacter nauticus (strain ATCC 700491 / DSM 11845 / VT8) (Marinobacter aquaeolei).